Consider the following 485-residue polypeptide: Probable cytosol aminopeptidase (485 aa).

Lysine 251 and aspartate 256 together coordinate Mn(2+). Residue lysine 263 is part of the active site. 3 residues coordinate Mn(2+): aspartate 274, aspartate 333, and glutamate 335. Residue arginine 337 is part of the active site.

The protein belongs to the peptidase M17 family. The cofactor is Mn(2+).

It localises to the cytoplasm. The catalysed reaction is Release of an N-terminal amino acid, Xaa-|-Yaa-, in which Xaa is preferably Leu, but may be other amino acids including Pro although not Arg or Lys, and Yaa may be Pro. Amino acid amides and methyl esters are also readily hydrolyzed, but rates on arylamides are exceedingly low.. It catalyses the reaction Release of an N-terminal amino acid, preferentially leucine, but not glutamic or aspartic acids.. In terms of biological role, presumably involved in the processing and regular turnover of intracellular proteins. Catalyzes the removal of unsubstituted N-terminal amino acids from various peptides. The polypeptide is Probable cytosol aminopeptidase (Brucella melitensis biotype 1 (strain ATCC 23456 / CCUG 17765 / NCTC 10094 / 16M)).